Here is a 326-residue protein sequence, read N- to C-terminus: Small ribosomal subunit protein RACK1x (326 aa).

WD repeat units follow at residues 13–53 (AHTD…KSYG), 61–100 (GHSH…TTRR), 103–142 (GHTK…KYTI), 147–188 (GHKE…LRNS), 191–230 (GHSG…KLYS), 232–270 (EAGS…VVED), and 290–326 (NQKK…IGRY).

Belongs to the WD repeat G protein beta family. Ribosomal protein RACK1 subfamily. Homodimer and heterodimer with RACK1A or RACK1B. Interacts with GB1, MEKK1, MKK4, MKK5, MPK3 and MPK6, but not with GPA1 or MPK4. Widely expressed.

Its function is as follows. Minor component of the RACK1 regulatory proteins that play a role in multiple signal transduction pathways. Involved in multiple hormone responses and developmental processes. MAPK cascade scaffolding protein involved in the protease IV and ArgC signaling pathway but not the flg22 pathway. This is Small ribosomal subunit protein RACK1x from Arabidopsis thaliana (Mouse-ear cress).